Here is a 253-residue protein sequence, read N- to C-terminus: Ubiquinone/menaquinone biosynthesis C-methyltransferase UbiE (253 aa).

S-adenosyl-L-methionine contacts are provided by residues threonine 76, aspartate 97, 125 to 126 (NA), and serine 142.

The protein belongs to the class I-like SAM-binding methyltransferase superfamily. MenG/UbiE family.

It carries out the reaction a 2-demethylmenaquinol + S-adenosyl-L-methionine = a menaquinol + S-adenosyl-L-homocysteine + H(+). It catalyses the reaction a 2-methoxy-6-(all-trans-polyprenyl)benzene-1,4-diol + S-adenosyl-L-methionine = a 5-methoxy-2-methyl-3-(all-trans-polyprenyl)benzene-1,4-diol + S-adenosyl-L-homocysteine + H(+). The protein operates within quinol/quinone metabolism; menaquinone biosynthesis; menaquinol from 1,4-dihydroxy-2-naphthoate: step 2/2. Its pathway is cofactor biosynthesis; ubiquinone biosynthesis. In terms of biological role, methyltransferase required for the conversion of demethylmenaquinol (DMKH2) to menaquinol (MKH2) and the conversion of 2-polyprenyl-6-methoxy-1,4-benzoquinol (DDMQH2) to 2-polyprenyl-3-methyl-6-methoxy-1,4-benzoquinol (DMQH2). The sequence is that of Ubiquinone/menaquinone biosynthesis C-methyltransferase UbiE from Xanthomonas campestris pv. campestris (strain ATCC 33913 / DSM 3586 / NCPPB 528 / LMG 568 / P 25).